The chain runs to 219 residues: RPA-interacting protein (219 aa).

Serine 18 is subject to Phosphoserine. A Glycyl lysine isopeptide (Lys-Gly) (interchain with G-Cter in SUMO); in isoform 2 cross-link involves residue lysine 121. Residues 137–212 (CPVCTKYNLR…SSLLMSCLAC (76 aa)) form an RIP-type zinc finger. The segment at 164–180 (SSELTEQKLRACLEGSI) is mediates nuclear export.

As to quaternary structure, interacts with the RPA1 subunit of RPA complex. Sumoylated. Sumoylation is required for localization in the nuclear PML body and transport of RPA complex in PML body. Upon UV irradiation and during S phase, it is desumoylated, releasing RPA complex that is translocated to sites of DNA damage. Sumoylation takes place at different Lys residues. Variant 'Lys-103' adds a sumoylation site and increases total sumoylation levels. As to expression, widely expressed. Expressed in pancreas, kidney, muscle, liver, lung, placenta, brain, heart, leukocytes, colon, intestine, ovary, testis, prostate, thymus and spleen.

It is found in the cytoplasm. Its subcellular location is the nucleus. The protein resides in the PML body. Mediates the import of RPA complex into the nucleus, possibly via some interaction with importin beta. Isoform 2 is sumoylated and mediates the localization of RPA complex into the PML body of the nucleus, thereby participating in RPA function in DNA metabolism. This chain is RPA-interacting protein (RPAIN), found in Homo sapiens (Human).